A 234-amino-acid chain; its full sequence is GTP:AMP phosphotransferase, mitochondrial (234 aa).

GTP is bound at residue 24-29 (GSGKGT). Residues 45–74 (SSGDILRQEIKSESTLGREATTYIAQGKLL) form an NMP region. AMP-binding positions include Ser-46, Arg-51, 72-74 (KLL), 103-106 (GFPR), and Gln-110. The tract at residues 144-181 (NRYVHVPSGRVYNLQYNPPKVPGLDDITGEPLTKRLDD) is LID. GTP is bound by residues Arg-145 and 154–155 (VY). Residues Arg-178 and Arg-189 each contribute to the AMP site. Ser-218 is a GTP binding site.

This sequence belongs to the adenylate kinase family. AK3 subfamily. As to quaternary structure, monomer.

The protein localises to the mitochondrion matrix. The catalysed reaction is a ribonucleoside 5'-triphosphate + AMP = a ribonucleoside 5'-diphosphate + ADP. Involved in maintaining the homeostasis of cellular nucleotides by catalyzing the interconversion of nucleoside phosphates. Has GTP:AMP phosphotransferase and ITP:AMP phosphotransferase activities. Does not accept ATP as phosphate donor. In Saccharomyces cerevisiae (Baker's yeast), this protein is GTP:AMP phosphotransferase, mitochondrial.